We begin with the raw amino-acid sequence, 1081 residues long: Carbamoyl phosphate synthase large chain (1081 aa).

The tract at residues 1–410 (MPKRTDIKTI…SFQKALRGLE (410 aa)) is carboxyphosphate synthetic domain. 12 residues coordinate ATP: R129, R176, G182, G183, E215, L217, E222, G248, I249, H250, Q292, and E306. Positions 133 to 335 (KEAMTKIGLG…IAKVAAKLAV (203 aa)) constitute an ATP-grasp 1 domain. Residues Q292, E306, and N308 each contribute to the Mg(2+) site. Mn(2+)-binding residues include Q292, E306, and N308. The tract at residues 411–558 (VGVDGLDEKS…YEAEHGECEA (148 aa)) is oligomerization domain. Positions 559 to 944 (DPTERKKIMV…ALFKSQLAAG (386 aa)) are carbamoyl phosphate synthetic domain. The region spanning 683–878 (QKLLHDLGLR…LAKVAARCMA (196 aa)) is the ATP-grasp 2 domain. Positions 719, 758, 760, 765, 790, 791, 792, 793, 833, and 849 each coordinate ATP. The Mg(2+) site is built by Q833, E849, and N851. Q833, E849, and N851 together coordinate Mn(2+). The 137-residue stretch at 945–1081 (SRLPEKGTVL…YDLQGLHASL (137 aa)) folds into the MGS-like domain. The tract at residues 945–1081 (SRLPEKGTVL…YDLQGLHASL (137 aa)) is allosteric domain.

The protein belongs to the CarB family. As to quaternary structure, composed of two chains; the small (or glutamine) chain promotes the hydrolysis of glutamine to ammonia, which is used by the large (or ammonia) chain to synthesize carbamoyl phosphate. Tetramer of heterodimers (alpha,beta)4. It depends on Mg(2+) as a cofactor. Requires Mn(2+) as cofactor.

The catalysed reaction is hydrogencarbonate + L-glutamine + 2 ATP + H2O = carbamoyl phosphate + L-glutamate + 2 ADP + phosphate + 2 H(+). It carries out the reaction hydrogencarbonate + NH4(+) + 2 ATP = carbamoyl phosphate + 2 ADP + phosphate + 2 H(+). The protein operates within amino-acid biosynthesis; L-arginine biosynthesis; carbamoyl phosphate from bicarbonate: step 1/1. Its pathway is pyrimidine metabolism; UMP biosynthesis via de novo pathway; (S)-dihydroorotate from bicarbonate: step 1/3. Functionally, large subunit of the glutamine-dependent carbamoyl phosphate synthetase (CPSase). CPSase catalyzes the formation of carbamoyl phosphate from the ammonia moiety of glutamine, carbonate, and phosphate donated by ATP, constituting the first step of 2 biosynthetic pathways, one leading to arginine and/or urea and the other to pyrimidine nucleotides. The large subunit (synthetase) binds the substrates ammonia (free or transferred from glutamine from the small subunit), hydrogencarbonate and ATP and carries out an ATP-coupled ligase reaction, activating hydrogencarbonate by forming carboxy phosphate which reacts with ammonia to form carbamoyl phosphate. The chain is Carbamoyl phosphate synthase large chain from Ralstonia nicotianae (strain ATCC BAA-1114 / GMI1000) (Ralstonia solanacearum).